The sequence spans 533 residues: Na(+)/H(+) antiporter NhaB (533 aa).

The next 10 helical transmembrane spans lie at 28-50 (FLII…VLVL), 67-87 (PGGL…SQVL), 96-116 (VLLL…LLLF), 131-165 (VSLM…FYSI), 254-274 (VPVL…GIFG), 316-336 (LIAG…SVII), 364-384 (LAVF…APVI), 396-416 (LVIF…VFVG), 454-474 (ATPN…APLI), and 481-501 (MVWM…MAIQ).

It belongs to the NhaB Na(+)/H(+) (TC 2.A.34) antiporter family.

It localises to the cell inner membrane. It carries out the reaction 2 Na(+)(in) + 3 H(+)(out) = 2 Na(+)(out) + 3 H(+)(in). Na(+)/H(+) antiporter that extrudes sodium in exchange for external protons. The protein is Na(+)/H(+) antiporter NhaB of Shewanella baltica (strain OS195).